The sequence spans 649 residues: MHGLLLAGLLALPSNVLGHPAEPPNSVNVTHRHIDTSAYFLPQLSLYNKSEDVAEYGGDNITGSSYSGGDHSASNLSSEDYVTVATSLLKATLPYASFRLIDDHYIGDSGIGHVHFRQTVYGIDIDNTDFNVNVGRDGKVFSYGSSFYEGEIPKANPVAKRDFSDPVNALIGAINTLNIPVTAAVGEVKTTPIEGNSTYMFKGTTGALTDPTAQLVYLQKDGGLHLTWRVETDVGDNWLLTYVDAKKNDQVHGVVDYVASAEYQVYPWGVNDPTDGERAHLYFPWFKTGSRNWHIDGRGWHTTTRGNNAIAQDNPSGGWEYEDNHRPTNPLLIFRYPYTQSMTPPASYRDASITQLFYTGNVYHDLLYILGFNEKAGNFQVNNWGKGGKGNDFTILNTQDGSGVNNANFATPPDGQPGRMRMYVWDTSTPYRDGSFEAGIVIHEYTHGVSNRLTGGPANSRCLSSLESGGMGEGWSDFFATVVHLKERDTRNKNYTIGEWASGRQGGIRKYPYSTDLHTNPLMYVDADGLESVHAIGTIWCTILNEVLWNLIERHGMGNVNKIKPTFKDGVPTDGRNLAMKLVLDGMALQPCLPNFVQARDAIIDADMNLTKGANRCELWKAFAKRGLGVGAAYNPEKRVGSSRVPGGC.

The signal sequence occupies residues 1–18 (MHGLLLAGLLALPSNVLG). A propeptide spanning residues 19-260 (HPAEPPNSVN…VHGVVDYVAS (242 aa)) is cleaved from the precursor. His-443 provides a ligand contact to Zn(2+). Glu-444 is an active-site residue. His-447 provides a ligand contact to Zn(2+). 2 N-linked (GlcNAc...) asparagine glycosylation sites follow: Asn-494 and Asn-609.

This sequence belongs to the peptidase M36 family. It depends on Zn(2+) as a cofactor.

It is found in the secreted. Secreted metalloproteinase probably acting as a virulence factor. This is Extracellular metalloproteinase 4 (MEP4) from Arthroderma otae (strain ATCC MYA-4605 / CBS 113480) (Microsporum canis).